Consider the following 1057-residue polypeptide: Self-sufficient cytochrome P450 monooxygenase CYP505E3 (1057 aa).

Heme is bound at residue C403. Positions 465–488 (PSAAPFSSHARETTNASLPASPGT) are disordered. The 141-residue stretch at 494–634 (MYVLYGSNTG…AFEAWETKLW (141 aa)) folds into the Flavodoxin-like domain. FMN contacts are provided by residues 500-504 (SNTGT) and 578-610 (VFGC…QRLV). Residues 671 to 900 (HDAALGTVIE…RASNAAFHLP (230 aa)) form the FAD-binding FR-type domain.

It in the N-terminal section; belongs to the cytochrome P450 family. FAD serves as cofactor. It depends on FMN as a cofactor. Heme is required as a cofactor.

The catalysed reaction is 2 oxidized [cytochrome P450] + NADPH = 2 reduced [cytochrome P450] + NADP(+) + H(+). The enzyme catalyses an organic molecule + reduced [NADPH--hemoprotein reductase] + O2 = an alcohol + oxidized [NADPH--hemoprotein reductase] + H2O + H(+). It catalyses the reaction dodecan-1-ol + reduced [NADPH--hemoprotein reductase] + O2 = 1,5-dodecanediol + oxidized [NADPH--hemoprotein reductase] + H2O + H(+). It carries out the reaction dodecan-1-ol + reduced [NADPH--hemoprotein reductase] + O2 = 1,6-dodecanediol + oxidized [NADPH--hemoprotein reductase] + H2O + H(+). In terms of biological role, self-sufficient cytochrome P450 monooxygenase that catalyzes the regioselective in-chain hydroxylation of fatty alcohols (C9-15) as well as fatty acids (C9-15) at the omega-1 to omega-7 or omega-1 to omega-6 positions, respectively. Is also able to convert naphthalene to 1-naphthol and 1-naphthol further to 1,3-dihydroxynaphthalene. The chain is Self-sufficient cytochrome P450 monooxygenase CYP505E3 from Phanerodontia chrysosporium (White-rot fungus).